A 243-amino-acid polypeptide reads, in one-letter code: UMP-CMP kinase 2 (243 aa).

69 to 74 (GSGKGT) contacts ATP. The segment at 89-118 (SAGDLLRSEISTGREKGELILNIIKEGKIV) is NMP. A ribonucleoside 5'-phosphate contacts are provided by residues arginine 95, 116 to 118 (KIV), and 143 to 146 (GFPR). Residue asparagine 150 coordinates CMP. Residues 181–189 (GRNQGRVDD) form an LID region. Arginine 182 provides a ligand contact to ATP. A ribonucleoside 5'-phosphate-binding residues include arginine 186 and arginine 197.

The protein belongs to the adenylate kinase family. UMP-CMP kinase subfamily. As to quaternary structure, monomer. Mg(2+) is required as a cofactor.

The protein resides in the cytoplasm. It is found in the nucleus. It carries out the reaction UMP + ATP = UDP + ADP. The catalysed reaction is CMP + ATP = CDP + ADP. The enzyme catalyses dCMP + ATP = dCDP + ADP. Functionally, catalyzes the phosphorylation of pyrimidine nucleoside monophosphates at the expense of ATP. Plays an important role in de novo pyrimidine nucleotide biosynthesis. Has preference for UMP and CMP as phosphate acceptors. This is UMP-CMP kinase 2 from Oryza sativa subsp. japonica (Rice).